Here is a 341-residue protein sequence, read N- to C-terminus: tRNA N6-adenosine threonylcarbamoyltransferase (341 aa).

Fe cation-binding residues include H112 and H116. Residues 134 to 138 (LASGG), D167, G180, and N279 each bind substrate. Fe cation is bound at residue D307.

The protein belongs to the KAE1 / TsaD family. Requires Fe(2+) as cofactor.

It is found in the cytoplasm. It carries out the reaction L-threonylcarbamoyladenylate + adenosine(37) in tRNA = N(6)-L-threonylcarbamoyladenosine(37) in tRNA + AMP + H(+). Its function is as follows. Required for the formation of a threonylcarbamoyl group on adenosine at position 37 (t(6)A37) in tRNAs that read codons beginning with adenine. Is involved in the transfer of the threonylcarbamoyl moiety of threonylcarbamoyl-AMP (TC-AMP) to the N6 group of A37, together with TsaE and TsaB. TsaD likely plays a direct catalytic role in this reaction. In Rickettsia bellii (strain OSU 85-389), this protein is tRNA N6-adenosine threonylcarbamoyltransferase.